The following is a 347-amino-acid chain: Methionine import ATP-binding protein MetN (347 aa).

One can recognise an ABC transporter domain in the interval 2 to 247 (ITTTGLTKVY…PGSELASALF (246 aa)). An ATP-binding site is contributed by 38 to 45 (GQSGAGKS).

Belongs to the ABC transporter superfamily. Methionine importer (TC 3.A.1.24) family. In terms of assembly, the complex is composed of two ATP-binding proteins (MetN), two transmembrane proteins (MetI) and a solute-binding protein (MetQ).

The protein localises to the cell membrane. It catalyses the reaction L-methionine(out) + ATP + H2O = L-methionine(in) + ADP + phosphate + H(+). The catalysed reaction is D-methionine(out) + ATP + H2O = D-methionine(in) + ADP + phosphate + H(+). In terms of biological role, part of the ABC transporter complex MetNIQ involved in methionine import. Responsible for energy coupling to the transport system. This is Methionine import ATP-binding protein MetN from Streptomyces avermitilis (strain ATCC 31267 / DSM 46492 / JCM 5070 / NBRC 14893 / NCIMB 12804 / NRRL 8165 / MA-4680).